Here is an 83-residue protein sequence, read N- to C-terminus: Putative defensin-like protein 131 (83 aa).

A signal peptide spans 1–34; that stretch reads MAKNRVLTIFYCTIYYCICFKYVLLGMVVEKTQG. 4 disulfides stabilise this stretch: Cys-37-Cys-83, Cys-46-Cys-65, Cys-51-Cys-77, and Cys-55-Cys-79.

It belongs to the DEFL family.

The protein localises to the secreted. This chain is Putative defensin-like protein 131 (LCR29), found in Arabidopsis thaliana (Mouse-ear cress).